The sequence spans 127 residues: uncharacterized protein (127 aa).

Helical transmembrane passes span 13–35 (ILLL…GIIF) and 57–81 (AVLI…IMIW).

It localises to the cell membrane. This is an uncharacterized protein from Mycoplasma genitalium (strain ATCC 33530 / DSM 19775 / NCTC 10195 / G37) (Mycoplasmoides genitalium).